Here is a 545-residue protein sequence, read N- to C-terminus: Chaperonin GroEL 1 (545 aa).

ATP contacts are provided by residues 30 to 33, Lys-51, 87 to 91, Gly-415, and Asp-495; these read TLGP and DGTTT.

It belongs to the chaperonin (HSP60) family. In terms of assembly, forms a cylinder of 14 subunits composed of two heptameric rings stacked back-to-back. Interacts with the co-chaperonin GroES.

It localises to the cytoplasm. It carries out the reaction ATP + H2O + a folded polypeptide = ADP + phosphate + an unfolded polypeptide.. Its function is as follows. Together with its co-chaperonin GroES, plays an essential role in assisting protein folding. The GroEL-GroES system forms a nano-cage that allows encapsulation of the non-native substrate proteins and provides a physical environment optimized to promote and accelerate protein folding. The protein is Chaperonin GroEL 1 of Sinorhizobium medicae (strain WSM419) (Ensifer medicae).